We begin with the raw amino-acid sequence, 66 residues long: Conotoxin Cal6.38 (66 aa).

An N-terminal signal peptide occupies residues 1–22 (MKLTFVLIVAVLVLAVCNFTVA). 3 disulfide bridges follow: Cys38–Cys55, Cys45–Cys59, and Cys54–Cys64.

Belongs to the conotoxin O1 superfamily. As to expression, expressed by the venom duct.

It localises to the secreted. Its function is as follows. Probable neurotoxin. This Californiconus californicus (California cone) protein is Conotoxin Cal6.38.